Consider the following 317-residue polypeptide: Melanocyte-stimulating hormone receptor (317 aa).

Over 1–37 (MPVQGSQRRLLGSLNSTPTATPHLGLAANQTGARCLE) the chain is Extracellular. Residue Asn-29 is glycosylated (N-linked (GlcNAc...) asparagine). The chain crosses the membrane as a helical span at residues 38–63 (VSIPDGLFLSLGLVSLVENVLVVTAI). The Cytoplasmic portion of the chain corresponds to 64–72 (AKNRNLHSP). Residues 73–93 (MYCFICCLALSDLLVSGSNML) traverse the membrane as a helical segment. The Extracellular portion of the chain corresponds to 94–118 (ETAVILLLEAGALAARAAVVQQLDN). A helical membrane pass occupies residues 119–140 (VIDVITCSSMLASLCFLGAIAV). Topologically, residues 141-163 (DRYISIFYALRYHSIVTLPRARR) are cytoplasmic. A helical membrane pass occupies residues 164–183 (AVAAIWVASVLFSMLFIAYY). Topologically, residues 184–191 (DHAAVLLC) are extracellular. Residues 192 to 211 (LVVFFLAMLVLMAVLYIHML) traverse the membrane as a helical segment. The Cytoplasmic portion of the chain corresponds to 212–240 (ARARQHAQGIARLHKRQCPAHQGFGLKGA). The chain crosses the membrane as a helical span at residues 241-266 (ATLTILLGIFFLCWGPFFLHLTLIVL). Over 267-279 (CPQHPTCSCIFKN) the chain is Extracellular. A helical transmembrane segment spans residues 280–300 (FNLFLALIICNAIIDPLIYAF). Residues 301–317 (RSQELRRTLKEVLLCSW) lie on the Cytoplasmic side of the membrane. The S-palmitoyl cysteine moiety is linked to residue Cys-315.

Belongs to the G-protein coupled receptor 1 family. Interacts with MGRN1, but does not undergo MGRN1-mediated ubiquitination; this interaction competes with GNAS-binding and thus inhibits agonist-induced cAMP production. Interacts with OPN3; the interaction results in a decrease in MC1R-mediated cAMP signaling and ultimately a decrease in melanin production in melanocytes.

It is found in the cell membrane. In terms of biological role, receptor for MSH (alpha, beta and gamma) and ACTH. The activity of this receptor is mediated by G proteins which activate adenylate cyclase. Mediates melanogenesis, the production of eumelanin (black/brown) and phaeomelanin (red/yellow), via regulation of cAMP signaling in melanocytes. In Cercopithecus mitis (Blue monkey), this protein is Melanocyte-stimulating hormone receptor (MC1R).